Consider the following 217-residue polypeptide: Histone H1C (217 aa).

2 stretches are compositionally biased toward low complexity: residues 1-11 (MAETASTETTP) and 28-45 (KKAAGGAKAKKPSGPSAS). 2 disordered regions span residues 1-45 (MAET…PSAS) and 123-217 (VAKK…AAKK). Residues 40–113 (SGPSASELIV…GASGSFKLNK (74 aa)) enclose the H15 domain. Composition is skewed to basic residues over residues 123–151 (VAKKKLVAPKAKKPVTAKKKPKSPKKPKK) and 159–217 (SPKK…AAKK).

The protein belongs to the histone H1/H5 family.

The protein localises to the nucleus. Its subcellular location is the chromosome. Functionally, histones H1 are necessary for the condensation of nucleosome chains into higher-order structures. The chain is Histone H1C from Xenopus laevis (African clawed frog).